Consider the following 393-residue polypeptide: Chorismate synthase (393 aa).

The NADP(+) site is built by Arg40 and Arg46. Residues 135 to 137, 257 to 258, Gly301, 316 to 320, and Arg342 contribute to the FMN site; these read RAS, QA, and KPIAT. Positions 280–306 are disordered; the sequence is DEIDVGPDGIRRRSNRAGGVEGGMSTG.

It belongs to the chorismate synthase family. Homotetramer. FMNH2 serves as cofactor.

The catalysed reaction is 5-O-(1-carboxyvinyl)-3-phosphoshikimate = chorismate + phosphate. Its pathway is metabolic intermediate biosynthesis; chorismate biosynthesis; chorismate from D-erythrose 4-phosphate and phosphoenolpyruvate: step 7/7. Functionally, catalyzes the anti-1,4-elimination of the C-3 phosphate and the C-6 proR hydrogen from 5-enolpyruvylshikimate-3-phosphate (EPSP) to yield chorismate, which is the branch point compound that serves as the starting substrate for the three terminal pathways of aromatic amino acid biosynthesis. This reaction introduces a second double bond into the aromatic ring system. This chain is Chorismate synthase, found in Thermobifida fusca (strain YX).